Here is a 414-residue protein sequence, read N- to C-terminus: Carboxynorspermidine synthase (414 aa).

The protein belongs to the saccharopine dehydrogenase family. Carboxynorspermidine synthase subfamily.

It catalyses the reaction carboxynorspermidine + NADP(+) + H2O = L-aspartate 4-semialdehyde + propane-1,3-diamine + NADPH + H(+). It carries out the reaction carboxyspermidine + NADP(+) + H2O = L-aspartate 4-semialdehyde + putrescine + NADPH + H(+). Functionally, involved in norspermidine biosynthesis. Catalyzes the synthesis of carboxynorspermidine from L-aspartate 4-semialdehyde and 1,3-diaminopropane. Is also active with putrescine as a substrate. Essential for biofilm formation. In Vibrio cholerae serotype O1 (strain ATCC 39315 / El Tor Inaba N16961), this protein is Carboxynorspermidine synthase.